A 544-amino-acid chain; its full sequence is CTP synthase (544 aa).

The amidoligase domain stretch occupies residues 1-265; the sequence is MTRYIFITGG…DTQVLAYFGL (265 aa). Serine 13 is a CTP binding site. Serine 13 is a binding site for UTP. Residue 14–19 participates in ATP binding; it reads SLGKGL. Position 54 (tyrosine 54) interacts with L-glutamine. Aspartate 71 is an ATP binding site. Residues aspartate 71 and glutamate 139 each coordinate Mg(2+). CTP-binding positions include 146–148, 186–191, and lysine 222; these read DIE and KTKPTQ. UTP contacts are provided by residues 186 to 191 and lysine 222; that span reads KTKPTQ. Valine 240 lines the ATP pocket. Positions 291–543 constitute a Glutamine amidotransferase type-1 domain; that stretch reads TIAVVGKYTS…IKAAIEQSRL (253 aa). Residue glycine 353 participates in L-glutamine binding. Residue cysteine 380 is the Nucleophile; for glutamine hydrolysis of the active site. L-glutamine-binding positions include 381 to 384, glutamate 404, and arginine 472; that span reads FGMQ. Residues histidine 516 and glutamate 518 contribute to the active site.

This sequence belongs to the CTP synthase family. In terms of assembly, homotetramer.

It catalyses the reaction UTP + L-glutamine + ATP + H2O = CTP + L-glutamate + ADP + phosphate + 2 H(+). The catalysed reaction is L-glutamine + H2O = L-glutamate + NH4(+). It carries out the reaction UTP + NH4(+) + ATP = CTP + ADP + phosphate + 2 H(+). It functions in the pathway pyrimidine metabolism; CTP biosynthesis via de novo pathway; CTP from UDP: step 2/2. With respect to regulation, allosterically activated by GTP, when glutamine is the substrate; GTP has no effect on the reaction when ammonia is the substrate. The allosteric effector GTP functions by stabilizing the protein conformation that binds the tetrahedral intermediate(s) formed during glutamine hydrolysis. Inhibited by the product CTP, via allosteric rather than competitive inhibition. Catalyzes the ATP-dependent amination of UTP to CTP with either L-glutamine or ammonia as the source of nitrogen. Regulates intracellular CTP levels through interactions with the four ribonucleotide triphosphates. This is CTP synthase from Azospirillum brasilense.